The primary structure comprises 319 residues: ATP-dependent 6-phosphofructokinase (319 aa).

Position 11 (glycine 11) interacts with ATP. An ADP-binding site is contributed by 21–25 (RAVVR). ATP-binding positions include 72–73 (RC) and 102–105 (GEGS). Mg(2+) is bound at residue glutamate 103. A substrate-binding site is contributed by 126 to 128 (TID). Aspartate 128 acts as the Proton acceptor in catalysis. Lysine 155 is an ADP binding site. Substrate-binding positions include arginine 163 and 170–172 (MGR). ADP contacts are provided by residues 186 to 188 (GAE), arginine 212, and 214 to 216 (KIN). Residues glutamate 223, arginine 244, and 250 to 253 (HVQR) each bind substrate.

The protein belongs to the phosphofructokinase type A (PFKA) family. ATP-dependent PFK group I subfamily. Prokaryotic clade 'B1' sub-subfamily. In terms of assembly, homotetramer. The cofactor is Mg(2+).

The protein localises to the cytoplasm. It catalyses the reaction beta-D-fructose 6-phosphate + ATP = beta-D-fructose 1,6-bisphosphate + ADP + H(+). It participates in carbohydrate degradation; glycolysis; D-glyceraldehyde 3-phosphate and glycerone phosphate from D-glucose: step 3/4. Allosterically activated by ADP and other diphosphonucleosides, and allosterically inhibited by phosphoenolpyruvate. In terms of biological role, catalyzes the phosphorylation of D-fructose 6-phosphate to fructose 1,6-bisphosphate by ATP, the first committing step of glycolysis. This is ATP-dependent 6-phosphofructokinase from Thermotoga neapolitana (strain ATCC 49049 / DSM 4359 / NBRC 107923 / NS-E).